The following is a 188-amino-acid chain: Photosystem I assembly protein Ycf4 (188 aa).

A run of 2 helical transmembrane segments spans residues 22–42 and 68–88; these read LGWA…GLSS and LVMC…WCAI.

It belongs to the Ycf4 family.

It is found in the plastid. It localises to the chloroplast thylakoid membrane. In terms of biological role, seems to be required for the assembly of the photosystem I complex. This is Photosystem I assembly protein Ycf4 from Zygnema circumcarinatum (Green alga).